Reading from the N-terminus, the 185-residue chain is UPF0301 protein PSHAa2600 (185 aa).

It belongs to the UPF0301 (AlgH) family.

The polypeptide is UPF0301 protein PSHAa2600 (Pseudoalteromonas translucida (strain TAC 125)).